The primary structure comprises 155 residues: Small ribosomal subunit protein uS7c (155 aa).

This sequence belongs to the universal ribosomal protein uS7 family. As to quaternary structure, part of the 30S ribosomal subunit.

Its subcellular location is the plastid. It is found in the chloroplast. In terms of biological role, one of the primary rRNA binding proteins, it binds directly to 16S rRNA where it nucleates assembly of the head domain of the 30S subunit. This chain is Small ribosomal subunit protein uS7c (rps7), found in Pinus thunbergii (Japanese black pine).